The following is a 1088-amino-acid chain: RNA-directed RNA polymerase (1088 aa).

The RdRp catalytic domain occupies 501-687; that stretch reads LSYGDVTRFL…AKRYIAGGKI (187 aa).

The protein belongs to the reoviridae RNA-directed RNA polymerase family. In terms of assembly, interacts with VP3 (Potential). Interacts with VP2; this interaction activates VP1. Interacts with NSP5; this interaction is probably necessary for the formation of functional virus factories. Interacts with NSP2; this interaction is weak. Requires Mg(2+) as cofactor.

Its subcellular location is the virion. It catalyses the reaction RNA(n) + a ribonucleoside 5'-triphosphate = RNA(n+1) + diphosphate. RNA-directed RNA polymerase that is involved in both transcription and genome replication. Together with VP3 capping enzyme, forms an enzyme complex positioned near the channels situated at each of the five-fold vertices of the core. Following infection, the outermost layer of the virus is lost, leaving a double-layered particle (DLP) made up of the core and VP6 shell. VP1 then catalyzes the transcription of fully conservative plus-strand genomic RNAs that are extruded through the DLP's channels into the cytoplasm where they function as mRNAs for translation of viral proteins. One copy of each of the viral (+)RNAs is also recruited during core assembly, together with newly synthesized polymerase complexes and VP2. The polymerase of these novo-formed particles catalyzes the synthesis of complementary minus-strands leading to dsRNA formation. To do so, the polymerase specifically recognizes and binds 4 bases 5'-UGUG-3' in the conserved 3'-sequence of plus-strand RNA templates. VP2 presumably activates the autoinhibited VP1-RNA complex to coordinate packaging and genome replication. Once dsRNA synthesis is complete, the polymerase switches to the transcriptional mode, thus providing secondary transcription. This Rotavirus A (strain RVA/SA11-Both/G3P5B[2]) (RV-A) protein is RNA-directed RNA polymerase.